A 333-amino-acid chain; its full sequence is Mitochondrial glycine transporter (333 aa).

Solcar repeat units lie at residues 10 to 93, 125 to 209, and 235 to 319; these read SKST…IRQS, LSNT…GKKR, and HAAS…LIRR. Helical transmembrane passes span 16–41 and 68–94; these read FAAG…TRVQ and GAVP…RQSA. The segment at 98–126 is disordered; that stretch reads SPLPSSSSSTTTSSSTTTSSSSSSLPKLS. 4 consecutive transmembrane segments (helical) span residues 131-156, 184-207, 239-265, and 294-312; these read LLAG…VRYE, GYGA…EQGK, INFA…KTRI, and GLAL…AWTV.

Belongs to the mitochondrial carrier (TC 2.A.29) family. SLC25A38 subfamily.

The protein resides in the mitochondrion inner membrane. The catalysed reaction is glycine(in) = glycine(out). In terms of biological role, mitochondrial glycine transporter that imports glycine into the mitochondrial matrix. Plays an important role in providing glycine for the first enzymatic step in heme biosynthesis, the condensation of glycine with succinyl-CoA to produce 5-aminolevulinate (ALA) in the mitochondrial matrix. The sequence is that of Mitochondrial glycine transporter from Chaetomium globosum (strain ATCC 6205 / CBS 148.51 / DSM 1962 / NBRC 6347 / NRRL 1970) (Soil fungus).